The primary structure comprises 271 residues: Glutamate racemase (271 aa).

Substrate-binding positions include 10-11 (DS) and 42-43 (YG). Residue C73 is the Proton donor/acceptor of the active site. 74-75 (NT) contributes to the substrate binding site. The active-site Proton donor/acceptor is the C183. 184–185 (TH) serves as a coordination point for substrate.

The protein belongs to the aspartate/glutamate racemases family.

It catalyses the reaction L-glutamate = D-glutamate. The protein operates within cell wall biogenesis; peptidoglycan biosynthesis. Provides the (R)-glutamate required for cell wall biosynthesis. The protein is Glutamate racemase of Lactococcus lactis subsp. cremoris (strain SK11).